Reading from the N-terminus, the 349-residue chain is Short-wave-sensitive opsin 1 (349 aa).

Over 1 to 34 (MSKMPEEEEFYLFKNISSVGPWDGPQYHIAPVWA) the chain is Extracellular. An N-linked (GlcNAc...) asparagine glycan is attached at asparagine 15. A helical transmembrane segment spans residues 35–59 (FQLQAAFMGIVFLAGLPLNSMVLVA). Residues 60 to 71 (TVRYKKLRHPLN) lie on the Cytoplasmic side of the membrane. The chain crosses the membrane as a helical span at residues 72 to 97 (YVLVNVSVGGFLLCIFSVLPVFVNSC). Residues 98–111 (NGYFVFGRHVCALE) are Extracellular-facing. The cysteines at positions 108 and 185 are disulfide-linked. A helical membrane pass occupies residues 112–131 (GFLGTVAGLVTGWSLAFLAF). Residues 132–150 (ERYIVICKPFGNFRFSSKH) lie on the Cytoplasmic side of the membrane. A helical membrane pass occupies residues 151 to 174 (ALMVVLTTWTIGIGVSIPPFFGWS). Residues 175 to 200 (RYIAEGLQCSCGPDWYTVGTKYRSEY) lie on the Extracellular side of the membrane. The helical transmembrane segment at 201-228 (YTWFLFIFCFIVPLSLICFSYAQLLRAL) threads the bilayer. The Cytoplasmic portion of the chain corresponds to 229–250 (KAVAAQQQESATTQKAEREVSR). The chain crosses the membrane as a helical span at residues 251–274 (MVVVMVGSFCVCYVPYAALAMYMV). Residues 275-282 (NNRNHGLD) are Extracellular-facing. Residues 283–307 (LRLVSIPAFFSKSSCIYNPIIYCFM) traverse the membrane as a helical segment. Lysine 294 bears the N6-(retinylidene)lysine mark. Over 308–349 (NKQFRACIMEMVCGKAMTDESDISSSQKTEVSTVSSSQVGPN) the chain is Cytoplasmic.

The protein belongs to the G-protein coupled receptor 1 family. Opsin subfamily. Post-translationally, phosphorylated on some or all of the serine and threonine residues present in the C-terminal region.

Its subcellular location is the cell membrane. The protein resides in the photoreceptor inner segment. The protein localises to the cell projection. It localises to the cilium. It is found in the photoreceptor outer segment. Its subcellular location is the cytoplasm. The protein resides in the perinuclear region. Its function is as follows. Visual pigments are the light-absorbing molecules that mediate vision. They consist of an apoprotein, opsin, covalently linked to cis-retinal. Required for the maintenance of cone outer segment organization in the ventral retina, but not essential for the maintenance of functioning cone photoreceptors. Involved in ensuring correct abundance and localization of retinal membrane proteins. May increase spectral sensitivity in dim light. The sequence is that of Short-wave-sensitive opsin 1 (OPN1SW) from Saimiri boliviensis boliviensis (Bolivian squirrel monkey).